Reading from the N-terminus, the 742-residue chain is Clamp-binding protein CrfC (742 aa).

The tract at residues 41-45 (QLALP) is clamp-binding consensus. Residues 66–402 (SRLEMVLAIV…LWEDSLFAQP (337 aa)) enclose the Dynamin-type G domain. The interval 76 to 83 (GTMKAGKS) is G1 motif. Residues 102–104 (MTA) form a G2 motif region. The G3 motif stretch occupies residues 236–239 (DTPG). The G4 motif stretch occupies residues 297-300 (NKFD). The segment at 331-334 (FPVS) is G5 motif. A coiled-coil region spans residues 440–472 (RAHGLNVACEQLRQNIHQVEESLQLLQLNQAQV).

It belongs to the TRAFAC class dynamin-like GTPase superfamily. Dynamin/Fzo/YdjA family. Forms homooligomers. Binds to the beta sliding clamp processivity factor (DnaN) in the presence and absence of DNA, may bind to the clamp itself as homodimers or trimers. Homooligomers may be able to bind more than 1 clamp complex.

Its subcellular location is the cytoplasm. In terms of biological role, important for the colocalization of sister nascent DNA strands after replication fork passage during DNA replication, and for positioning and subsequent partitioning of sister chromosomes. Does not have GTPase activity on its own. This Escherichia coli protein is Clamp-binding protein CrfC (crfC).